The primary structure comprises 132 residues: Cytochrome c' (132 aa).

Heme c contacts are provided by R10, Q11, D65, C122, C125, and H126.

Post-translationally, binds 1 heme c group covalently per subunit.

Cytochrome c' is the most widely occurring bacterial c-type cytochrome. Cytochromes c' are high-spin proteins and the heme has no sixth ligand. Their exact function is not known. The sequence is that of Cytochrome c' from Halomonas halodenitrificans (strain ATCC 12084 / NCIMB 8669) (Paracoccus halodenitrificans).